Reading from the N-terminus, the 880-residue chain is Alanine--tRNA ligase (880 aa).

Residues His-567, His-571, Cys-669, and His-673 each contribute to the Zn(2+) site.

It belongs to the class-II aminoacyl-tRNA synthetase family. The cofactor is Zn(2+).

It localises to the cytoplasm. The enzyme catalyses tRNA(Ala) + L-alanine + ATP = L-alanyl-tRNA(Ala) + AMP + diphosphate. Functionally, catalyzes the attachment of alanine to tRNA(Ala) in a two-step reaction: alanine is first activated by ATP to form Ala-AMP and then transferred to the acceptor end of tRNA(Ala). Also edits incorrectly charged Ser-tRNA(Ala) and Gly-tRNA(Ala) via its editing domain. The protein is Alanine--tRNA ligase of Bacillus thuringiensis subsp. konkukian (strain 97-27).